A 452-amino-acid polypeptide reads, in one-letter code: Pup--protein ligase (452 aa).

Position 9 (Glu-9) interacts with Mg(2+). Arg-53 serves as a coordination point for ATP. Tyr-55 provides a ligand contact to Mg(2+). Asp-57 (proton acceptor) is an active-site residue. Residue Glu-63 participates in Mg(2+) binding. Residues Thr-66 and Trp-419 each coordinate ATP.

This sequence belongs to the Pup ligase/Pup deamidase family. Pup-conjugating enzyme subfamily.

It carries out the reaction ATP + [prokaryotic ubiquitin-like protein]-L-glutamate + [protein]-L-lysine = ADP + phosphate + N(6)-([prokaryotic ubiquitin-like protein]-gamma-L-glutamyl)-[protein]-L-lysine.. It functions in the pathway protein degradation; proteasomal Pup-dependent pathway. The protein operates within protein modification; protein pupylation. In terms of biological role, catalyzes the covalent attachment of the prokaryotic ubiquitin-like protein modifier Pup to the proteasomal substrate proteins, thereby targeting them for proteasomal degradation. This tagging system is termed pupylation. The ligation reaction involves the side-chain carboxylate of the C-terminal glutamate of Pup and the side-chain amino group of a substrate lysine. This Mycobacterium sp. (strain JLS) protein is Pup--protein ligase.